Reading from the N-terminus, the 1870-residue chain is Dedicator of cytokinesis protein 5 (1870 aa).

An SH3 domain is found at 8–69 (KRQKYGVAIY…PETYIHLKEA (62 aa)). At serine 365 the chain carries Phosphoserine. In terms of domain architecture, C2 DOCK-type spans 443 to 627 (RNDIYVTLIH…DSFQIATLIC (185 aa)). Lysine 818 is subject to N6-acetyllysine. Positions 1231–1642 (YKEKKREDIY…VEKHYGVITL (412 aa)) constitute a DOCKER domain. Residues 1679–1702 (VVSTSSNSSDNAPSRPGSDGSILE) are disordered. Residues serine 1756, serine 1766, serine 1785, and serine 1789 each carry the phosphoserine modification. The interval 1772–1870 (NRLSPFHGSS…GIPTSEPGSQ (99 aa)) is disordered. The segment covering 1784–1794 (QSTPLSPPPLT) has biased composition (pro residues). Threonine 1794 bears the Phosphothreonine mark. A compositionally biased stretch (polar residues) spans 1797 to 1808 (ATRTLSSPSLQT). Threonine 1814 carries the phosphothreonine modification. Pro residues predominate over residues 1815-1824 (PVPPPPPPKS). Phosphoserine is present on residues serine 1834 and serine 1869.

This sequence belongs to the DOCK family. Interacts with CRK and CRKL. Interacts (via N-terminus) with tensin TNS3 (via N-terminus); the interaction increases DOCK5 guanine nucleotide exchange activity towards Rac. Interacts with ELMO1.

It is found in the cytoplasm. The protein resides in the cell membrane. The protein localises to the cell projection. Its subcellular location is the podosome. Guanine nucleotide exchange factor (GEF) for Rho and Rac. GEF proteins activate small GTPases by exchanging bound GDP for free GTP. Along with DOCK1, mediates CRK/CRKL regulation of epithelial and endothelial cell spreading and migration on type IV collagen. The chain is Dedicator of cytokinesis protein 5 (DOCK5) from Homo sapiens (Human).